The primary structure comprises 345 residues: Uroporphyrinogen decarboxylase (345 aa).

Substrate-binding positions include 27-31 (RQAGR), Phe46, Asp76, Tyr152, Ser207, and His320.

Belongs to the uroporphyrinogen decarboxylase family. As to quaternary structure, homodimer.

The protein resides in the cytoplasm. The enzyme catalyses uroporphyrinogen III + 4 H(+) = coproporphyrinogen III + 4 CO2. It participates in porphyrin-containing compound metabolism; protoporphyrin-IX biosynthesis; coproporphyrinogen-III from 5-aminolevulinate: step 4/4. In terms of biological role, catalyzes the decarboxylation of four acetate groups of uroporphyrinogen-III to yield coproporphyrinogen-III. In Geobacillus thermodenitrificans (strain NG80-2), this protein is Uroporphyrinogen decarboxylase.